Reading from the N-terminus, the 151-residue chain is Ubiquitin-conjugating enzyme E2 2 (151 aa).

A disordered region spans residues 1–26; that stretch reads MSTSARRRLMRDFKRMQTDPPAGVSA. One can recognise a UBC core domain in the interval 4–150; the sequence is SARRRLMRDF…VRETVEKSWE (147 aa). C88 serves as the catalytic Glycyl thioester intermediate.

It belongs to the ubiquitin-conjugating enzyme family.

Its subcellular location is the cytoplasm. The protein resides in the nucleus. The enzyme catalyses S-ubiquitinyl-[E1 ubiquitin-activating enzyme]-L-cysteine + [E2 ubiquitin-conjugating enzyme]-L-cysteine = [E1 ubiquitin-activating enzyme]-L-cysteine + S-ubiquitinyl-[E2 ubiquitin-conjugating enzyme]-L-cysteine.. It participates in protein modification; protein ubiquitination. Its function is as follows. Catalyzes the covalent attachment of ubiquitin to other proteins. Plays a role in transcription regulation by catalyzing the monoubiquitination of histone H2B to form H2BK123ub1. H2BK123ub1 gives a specific tag for epigenetic transcriptional activation and is also a prerequisite for H3K4me and H3K79me formation. Also involved in postreplication repair of UV-damaged DNA, in N-end rule-dependent protein degradation and in sporulation. The polypeptide is Ubiquitin-conjugating enzyme E2 2 (uvsJ) (Emericella nidulans (strain FGSC A4 / ATCC 38163 / CBS 112.46 / NRRL 194 / M139) (Aspergillus nidulans)).